An 842-amino-acid polypeptide reads, in one-letter code: Glucans biosynthesis glucosyltransferase H (842 aa).

8 helical membrane-spanning segments follow: residues 140 to 160 (ILLLLTLSQTVVATWYMKTIL), 194 to 214 (ILILFAVLFCWVSAGFWTALM), 513 to 533 (VFLTGVMSYLSAPLWFMFLAL), 568 to 588 (IALFASTMVLLFLPKLLSIIL), 600 to 620 (FIRVTLSLLLEVLFSVLLAPV), 622 to 642 (MLFHTVFVVSAFLGWEVVWNS), 656 to 676 (FMRHGSQLLLGLVWAVGMAWL), and 680 to 700 (FLFWLAPIVVSLILSPFVSAI).

It belongs to the glycosyltransferase 2 family. OpgH subfamily.

Its subcellular location is the cell inner membrane. Its pathway is glycan metabolism; osmoregulated periplasmic glucan (OPG) biosynthesis. Functionally, involved in the biosynthesis of osmoregulated periplasmic glucans (OPGs). In Klebsiella pneumoniae (strain 342), this protein is Glucans biosynthesis glucosyltransferase H.